Here is a 187-residue protein sequence, read N- to C-terminus: UPF0301 protein HS_0009 (187 aa).

Belongs to the UPF0301 (AlgH) family.

The protein is UPF0301 protein HS_0009 of Histophilus somni (strain 129Pt) (Haemophilus somnus).